A 182-amino-acid chain; its full sequence is Ribosome-recycling factor (182 aa).

Positions 137–158 (KKSEKESEISEDQSRDEQDNVQ) are disordered.

This sequence belongs to the RRF family.

Its subcellular location is the cytoplasm. Responsible for the release of ribosomes from messenger RNA at the termination of protein biosynthesis. May increase the efficiency of translation by recycling ribosomes from one round of translation to another. The sequence is that of Ribosome-recycling factor from Prochlorococcus marinus (strain MIT 9211).